A 397-amino-acid chain; its full sequence is Corticosteroid-binding globulin (397 aa).

The first 22 residues, 1-22 (MSLALYTCLFWLCTSGLWTTQA), serve as a signal peptide directing secretion. Residues asparagine 89, asparagine 169, asparagine 217, and asparagine 232 are each glycosylated (N-linked (GlcNAc...) asparagine). Glutamine 247 is a cortisol binding site. N-linked (GlcNAc...) asparagine glycosylation occurs at asparagine 253. A cortisol-binding site is contributed by aspartate 279. Asparagine 320 carries N-linked (GlcNAc...) asparagine glycosylation. Tryptophan 385 contacts cortisol.

It belongs to the serpin family. As to expression, expressed by the liver; secreted in plasma.

The protein localises to the secreted. Functionally, major transport protein for glucocorticoids and progestins in the blood of almost all vertebrate species. The protein is Corticosteroid-binding globulin (Serpina6) of Mus musculus (Mouse).